The primary structure comprises 279 residues: S-methyl-5'-thioadenosine phosphorylase (279 aa).

Phosphate-binding positions include S13, 55–56 (RH), and 88–89 (TA). M191 serves as a coordination point for substrate. T192 is a phosphate binding site. 215-217 (DYD) lines the substrate pocket.

It belongs to the PNP/MTAP phosphorylase family. MTAP subfamily. As to quaternary structure, homotrimer.

It is found in the cytoplasm. It localises to the nucleus. It catalyses the reaction S-methyl-5'-thioadenosine + phosphate = 5-(methylsulfanyl)-alpha-D-ribose 1-phosphate + adenine. It participates in amino-acid biosynthesis; L-methionine biosynthesis via salvage pathway; S-methyl-5-thio-alpha-D-ribose 1-phosphate from S-methyl-5'-thioadenosine (phosphorylase route): step 1/1. Its function is as follows. Catalyzes the reversible phosphorylation of S-methyl-5'-thioadenosine (MTA) to adenine and 5-methylthioribose-1-phosphate. Involved in the breakdown of MTA, a major by-product of polyamine biosynthesis. Responsible for the first step in the methionine salvage pathway after MTA has been generated from S-adenosylmethionine. Has broad substrate specificity with 6-aminopurine nucleosides as preferred substrates. The protein is S-methyl-5'-thioadenosine phosphorylase of Aedes aegypti (Yellowfever mosquito).